Consider the following 223-residue polypeptide: MQLKPMEINPEMLNKVLSRLGVAGQWRFVDVLGLEEESLGSVPAPACALLLLFPLTAQHENFRKKQIEELKGQEVSPKVYFMKQTIGNSCGTIGLIHAVANNQDKLGFEDGSVLKQFLSETEKMSPEDRAKCFEKNEAIQAAHDAVAQEGQCRVDDKVNFHFILFNNVDGHLYELDGRMPFPVNHGASSEDTLLKDAAKVCREFTEREQGEVRFSAVALCKAA.

M1 carries the post-translational modification N-acetylmethionine. The UCH catalytic domain occupies 2–221 (QLKPMEINPE…VRFSAVALCK (220 aa)). The segment at 5–10 (PMEINP) is interaction with ubiquitin. C90 acts as the Nucleophile in catalysis. The residue at position 125 (S125) is a Phosphoserine. Residue H161 is the Proton donor of the active site. Residues 211–216 (EVRFSA) form an interaction with ubiquitin region. C220 carries S-farnesyl cysteine lipidation. A propeptide spans 221 to 223 (KAA) (removed in mature form).

The protein belongs to the peptidase C12 family. As to quaternary structure, monomer. Homodimer. Interacts with SNCA. Interacts with COPS5. Post-translationally, O-glycosylated. Found in neuronal cell bodies and processes throughout the neocortex (at protein level). Expressed in neurons and cells of the diffuse neuroendocrine system and their tumors. Weakly expressed in ovary. Down-regulated in brains from Parkinson disease and Alzheimer disease patients.

The protein localises to the cytoplasm. The protein resides in the endoplasmic reticulum membrane. It carries out the reaction Thiol-dependent hydrolysis of ester, thioester, amide, peptide and isopeptide bonds formed by the C-terminal Gly of ubiquitin (a 76-residue protein attached to proteins as an intracellular targeting signal).. Functionally, deubiquitinase that plays a role in the regulation of several processes such as maintenance of synaptic function, cardiac function, inflammatory response or osteoclastogenesis. Abrogates the ubiquitination of multiple proteins including WWTR1/TAZ, EGFR, HIF1A and beta-site amyloid precursor protein cleaving enzyme 1/BACE1. In addition, recognizes and hydrolyzes a peptide bond at the C-terminal glycine of ubiquitin to maintain a stable pool of monoubiquitin that is a key requirement for the ubiquitin-proteasome and the autophagy-lysosome pathways. Regulates amyloid precursor protein/APP processing by promoting BACE1 degradation resulting in decreased amyloid beta production. Plays a role in the immune response by regulating the ability of MHC I molecules to reach cross-presentation compartments competent for generating Ag-MHC I complexes. Mediates the 'Lys-48'-linked deubiquitination of the transcriptional coactivator WWTR1/TAZ leading to its stabilization and inhibition of osteoclastogenesis. Deubiquitinates and stabilizes epidermal growth factor receptor EGFR to prevent its degradation and to activate its downstream mediators. Modulates oxidative activity in skeletal muscle by regulating key mitochondrial oxidative proteins. Enhances the activity of hypoxia-inducible factor 1-alpha/HIF1A by abrogateing its VHL E3 ligase-mediated ubiquitination and consequently inhibiting its degradation. This chain is Ubiquitin carboxyl-terminal hydrolase isozyme L1 (UCHL1), found in Homo sapiens (Human).